Here is a 111-residue protein sequence, read N- to C-terminus: MQKFLKLVLVTFLFLISTLTPPANAENTINGEQIFSVHCAGCHINGSNIIRRGKNLQKKTLKKYGMDSLEAIEAIVTNGKNNMSAYKDRLSEQEIQDVAAYVLEQAEKGWR.

Positions Met-1 to Ala-25 are cleaved as a signal peptide. Residues Cys-39, Cys-42, His-43, and Met-83 each contribute to the heme c site.

Belongs to the cytochrome c family. PetJ subfamily. In terms of processing, binds 1 heme c group covalently per subunit.

It localises to the cellular thylakoid lumen. The sequence is that of Cytochrome c6-like from Nostoc sp. (strain PCC 7120 / SAG 25.82 / UTEX 2576).